The chain runs to 150 residues: Dynein light chain Tctex-type protein 2B (150 aa).

Belongs to the dynein light chain Tctex-type family.

It is found in the dynein axonemal particle. Its function is as follows. Acts as one of several non-catalytic accessory components of the cytoplasmic dynein 2 complex (dynein-2 complex), a motor protein complex that drives the movement of cargos along microtubules within cilia and flagella in concert with the intraflagellar transport (IFT) system. Required for proper retrograde ciliary transport. This is Dynein light chain Tctex-type protein 2B (dynlt2b) from Danio rerio (Zebrafish).